We begin with the raw amino-acid sequence, 143 residues long: uncharacterized protein (143 aa).

Residues 1–143 are disordered; sequence MRSSRQKASI…WFSQTVKRKA (143 aa). Composition is skewed to basic and acidic residues over residues 34-46 and 61-76; these read ISAE…KHLD and EYQK…RKIV. Acidic residues-rich tracts occupy residues 77–93 and 103–115; these read DDEE…PEEE and YEEE…PDLA.

This is an uncharacterized protein from Bacillus subtilis (strain 168).